Here is a 369-residue protein sequence, read N- to C-terminus: Phosphoserine aminotransferase (369 aa).

Position 42 (R42) interacts with L-glutamate. 4 residues coordinate pyridoxal 5'-phosphate: W101, T152, D176, and Q199. N6-(pyridoxal phosphate)lysine is present on K200. 241 to 242 contacts pyridoxal 5'-phosphate; the sequence is NT.

Belongs to the class-V pyridoxal-phosphate-dependent aminotransferase family. SerC subfamily. In terms of assembly, homodimer. Pyridoxal 5'-phosphate is required as a cofactor.

The protein resides in the cytoplasm. The enzyme catalyses O-phospho-L-serine + 2-oxoglutarate = 3-phosphooxypyruvate + L-glutamate. It catalyses the reaction 4-(phosphooxy)-L-threonine + 2-oxoglutarate = (R)-3-hydroxy-2-oxo-4-phosphooxybutanoate + L-glutamate. The protein operates within amino-acid biosynthesis; L-serine biosynthesis; L-serine from 3-phospho-D-glycerate: step 2/3. Its pathway is cofactor biosynthesis; pyridoxine 5'-phosphate biosynthesis; pyridoxine 5'-phosphate from D-erythrose 4-phosphate: step 3/5. Functionally, catalyzes the reversible conversion of 3-phosphohydroxypyruvate to phosphoserine and of 3-hydroxy-2-oxo-4-phosphonooxybutanoate to phosphohydroxythreonine. The sequence is that of Phosphoserine aminotransferase from Delftia acidovorans (strain DSM 14801 / SPH-1).